The sequence spans 276 residues: MNVPFWTEEHVRATLPERDAESHKGTYGTALLLAGSDDMPGAALLAGLGAMRSGLGKLVIGTSENVIPLIVPVLPEATYWRDGWKKAADAQLEETYRAIAIGPGLPQTESVQQAVDHVLTADCPVILDAGALAKRTYPKREGPVILTPHPGEFFRMTGVPVNELQKKRAEYAKEWAAQLQTVIVLKGNQTVIAFPDGDCWLNPTGNGALAKGGTGDTLTGMILGMLCCHEDPKHAVLNAVYLHGACAELWTDEHSAHTLLAHELSDILPRVWKRFE.

Residues 7–275 (TEEHVRATLP…DILPRVWKRF (269 aa)) enclose the YjeF C-terminal domain. 3 residues coordinate (6S)-NADPHX: Ala42, Gly104, and His149. AMP-binding positions include 186 to 190 (KGNQT) and Gly215. Asp216 lines the (6S)-NADPHX pocket.

It belongs to the NnrD/CARKD family. As to quaternary structure, homotetramer. Mg(2+) is required as a cofactor.

The enzyme catalyses (6S)-NADHX + ADP = AMP + phosphate + NADH + H(+). The catalysed reaction is (6S)-NADPHX + ADP = AMP + phosphate + NADPH + H(+). Catalyzes the dehydration of the S-form of NAD(P)HX at the expense of ADP, which is converted to AMP. Together with NAD(P)HX epimerase, which catalyzes the epimerization of the S- and R-forms, the enzyme allows the repair of both epimers of NAD(P)HX, a damaged form of NAD(P)H that is a result of enzymatic or heat-dependent hydration. The chain is ADP-dependent (S)-NAD(P)H-hydrate dehydratase from Bacillus subtilis (strain 168).